The sequence spans 493 residues: uncharacterized protein (493 aa).

Positions 96 to 124 are disordered; it reads TTVAKASPPPAKPASAPTEITWKGSPQFT.

This is an uncharacterized protein from Caulobacter vibrioides (strain ATCC 19089 / CIP 103742 / CB 15) (Caulobacter crescentus).